The sequence spans 210 residues: Guanylate kinase (210 aa).

The Guanylate kinase-like domain maps to 6–186 (GLLGIISAPS…ALIYLQSVIL (181 aa)). 13–20 (APSGAGKS) serves as a coordination point for ATP.

This sequence belongs to the guanylate kinase family.

It localises to the cytoplasm. It catalyses the reaction GMP + ATP = GDP + ADP. Essential for recycling GMP and indirectly, cGMP. This is Guanylate kinase from Blochmanniella floridana.